A 221-amino-acid polypeptide reads, in one-letter code: Pectate lyase C (221 aa).

The N-terminal stretch at 1–27 (MKKIVSILFMFGLVMGFSQFQPSTVFA) is a signal peptide.

The protein belongs to the polysaccharide lyase 3 family. It depends on Ca(2+) as a cofactor.

It is found in the secreted. The catalysed reaction is Eliminative cleavage of (1-&gt;4)-alpha-D-galacturonan to give oligosaccharides with 4-deoxy-alpha-D-galact-4-enuronosyl groups at their non-reducing ends.. The enzyme catalyses Eliminative cleavage of (1-&gt;4)-alpha-D-galacturonan methyl ester to give oligosaccharides with 4-deoxy-6-O-methyl-alpha-D-galact-4-enuronosyl groups at their non-reducing ends.. It functions in the pathway glycan metabolism; pectin degradation; 2-dehydro-3-deoxy-D-gluconate from pectin: step 2/5. Catalyzes the depolymerization of both polygalacturonate and pectins of methyl esterification degree from 22 to 89%, with an endo mode of action. In contrast to the majority of pectate lyases, displays high activity on highly methylated pectins. Is also able to cleave trigalacturonate to galacturonic acid and unsaturated digalacturonate. The protein is Pectate lyase C (pelC) of Bacillus subtilis (strain 168).